A 261-amino-acid polypeptide reads, in one-letter code: Flap endonuclease Xni (261 aa).

Residue Asp-105 coordinates Mg(2+). A 5'-3' exonuclease domain is found at 164 to 256 (SQFLDLMALA…DFRVNSPTKA (93 aa)). Leu-172, Ala-173, Pro-181, Ile-183, and Ile-186 together coordinate K(+). Residues 185–190 (GIGPKS) are interaction with DNA.

This sequence belongs to the Xni family. Requires Mg(2+) as cofactor. It depends on K(+) as a cofactor.

In terms of biological role, has flap endonuclease activity. During DNA replication, flap endonucleases cleave the 5'-overhanging flap structure that is generated by displacement synthesis when DNA polymerase encounters the 5'-end of a downstream Okazaki fragment. This chain is Flap endonuclease Xni, found in Shewanella oneidensis (strain ATCC 700550 / JCM 31522 / CIP 106686 / LMG 19005 / NCIMB 14063 / MR-1).